The sequence spans 268 residues: Helix-loop-helix protein 6 (268 aa).

A compositionally biased stretch (low complexity) spans 117–130 (QSQVQPQLPTQSQP). A disordered region spans residues 117-140 (QSQVQPQLPTQSQPKPSSKASLDT). Residues 131-140 (KPSSKASLDT) show a composition bias toward polar residues. One can recognise a bHLH domain in the interval 173–225 (SSVWKRNERERCRVRNVNDGYERLRKHLPVHFDEKRISKVDTLRLAIRYIKHL).

As to expression, expressed in the gland cells of the pharynx and weakly in the pharyngeal neuron.

It is found in the nucleus. Its function is as follows. Transcription factor that regulates the development of the g2 pharyngeal gland cells and pharyngeal gland function and thereby is required for feeding. Required for the expression of a number of genes in the pharyngeal gland, possibly by binding to the E box motif (5'-CANNTG-3') in the promoter region of these genes. Positively regulates the expression of genes encoding mucin-like proteins, which lubricate the pharyngeal tract to ensure efficient passage of the bacterial food source. Exhibits pharyngeal gland-specific positive autoregulation activity. This Caenorhabditis elegans protein is Helix-loop-helix protein 6 (hlh-6).